A 139-amino-acid chain; its full sequence is Drosulfakinins (139 aa).

The signal sequence occupies residues 1–35 (MGHRGMGCAHFATMAMPLWALTFYLLVVLPVPSQT). Residues 36–71 (ASVEVGKEERRLQDLDPKMGSEAGNTDGLSLARFGS) constitute a propeptide that is removed on maturation. F80 is subject to Phenylalanine amide. The propeptide occupies 81-109 (GHRVPIISRPVIPIELDLLMDNEDDRTMS). Y115 is modified (sulfotyrosine). F120 is subject to Phenylalanine amide. Y132 carries the sulfotyrosine modification. F137 is subject to Phenylalanine amide.

It belongs to the gastrin/cholecystokinin family.

The protein resides in the secreted. Functionally, drosulfakinin-0 (DSK 0) plays diverse biological roles including regulating gut muscle contraction in adults but not in larvae. This is Drosulfakinins from Drosophila pseudoobscura pseudoobscura (Fruit fly).